We begin with the raw amino-acid sequence, 96 residues long: Small ribosomal subunit protein bS6 (96 aa).

Belongs to the bacterial ribosomal protein bS6 family.

Binds together with bS18 to 16S ribosomal RNA. In Mycobacteroides abscessus (strain ATCC 19977 / DSM 44196 / CCUG 20993 / CIP 104536 / JCM 13569 / NCTC 13031 / TMC 1543 / L948) (Mycobacterium abscessus), this protein is Small ribosomal subunit protein bS6.